The primary structure comprises 843 residues: Neuroligin-1 (843 aa).

The N-terminal stretch at 1 to 45 (MALPRCMWPNYVWRAMMACVVHRGSGAPLTLCLLGCLLQTFHVLS) is a signal peptide. The Extracellular portion of the chain corresponds to 46–697 (QKLDDVDPLV…DQRDYSTELS (652 aa)). Asparagine 109 carries an N-linked (GlcNAc...) (complex) asparagine glycan. The cysteines at positions 117 and 153 are disulfide-linked. The segment at 167-190 (LTKKHTDDLGDNDGAEDEDIRDSG) is disordered. Over residues 175–186 (LGDNDGAEDEDI) the composition is skewed to acidic residues. Residues asparagine 303 and asparagine 343 are each glycosylated (N-linked (GlcNAc...) (complex) asparagine). 2 disulfide bridges follow: cysteine 342-cysteine 353 and cysteine 512-cysteine 546. The N-linked (GlcNAc...) asparagine glycan is linked to asparagine 547. Positions 647 to 688 (TKVPSTDITLRPTRKNSTPVTSAFPTAKQDDPKQQPSPFSVD) are disordered. Positions 661–670 (KNSTPVTSAF) are enriched in polar residues. Residues serine 683 and serine 686 are each glycosylated (O-linked (GalNAc...) serine). A helical membrane pass occupies residues 698–718 (VTIAVGASLLFLNILAFAALY). At 719–843 (YKKDKRRHDV…HPHSHSTTRV (125 aa)) the chain is on the cytoplasmic side. The interval 822-843 (GGQNNTLPHPHPHPHSHSTTRV) is disordered. Basic residues predominate over residues 831–843 (PHPHPHSHSTTRV).

This sequence belongs to the type-B carboxylesterase/lipase family. As to quaternary structure, interacts with neurexins NRXN1, NRXN2 and NRXN3. Interaction with neurexins is mediated by heparan sulfate glycan modification on neurexin. Interacts (via its C-terminus) with DLG4/PSD-95 (via PDZ domain 3). Interacts with AIP1, GOPC and PDZRN3. Interacts with NLGN3. As to expression, brain and arteries (at protein level). Expressed in olfactory bulb. Detected in brain.

It is found in the cell membrane. The protein localises to the postsynaptic density. It localises to the synaptic cleft. The protein resides in the synaptic cell membrane. Functionally, cell surface protein involved in cell-cell-interactions via its interactions with neurexin family members. Plays a role in synapse function and synaptic signal transmission, and probably mediates its effects by recruiting and clustering other synaptic proteins. May promote the initial formation of synapses, but is not essential for this. In vitro, triggers the de novo formation of presynaptic structures. May be involved in specification of excitatory synapses. Required to maintain wakefulness quality and normal synchrony of cerebral cortex activity during wakefulness and sleep. The protein is involved in nervous system development. The chain is Neuroligin-1 (Nlgn1) from Mus musculus (Mouse).